A 388-amino-acid polypeptide reads, in one-letter code: NADPH-dependent butanol dehydrogenase (388 aa).

The protein belongs to the iron-containing alcohol dehydrogenase family.

Its function is as follows. This enzyme has activity using butanol and ethanol as substrates. In Clostridium saccharobutylicum, this protein is NADPH-dependent butanol dehydrogenase (adh1).